The chain runs to 633 residues: Extracellular metalloproteinase mep (633 aa).

The first 18 residues, 1-18 (MRLLSLAGAMALPLCVLA), serve as a signal peptide directing secretion. Positions 19-244 (HPTHRTRGIA…IHGVVDYISD (226 aa)) are excised as a propeptide. A glycan (N-linked (GlcNAc...) asparagine) is linked at Asn-326. His-428 is a Zn(2+) binding site. Glu-429 is a catalytic residue. Position 432 (His-432) interacts with Zn(2+). A glycan (N-linked (GlcNAc...) asparagine) is linked at Asn-514.

The protein belongs to the peptidase M36 family. The cofactor is Zn(2+).

The protein localises to the secreted. Functionally, secreted metalloproteinase that allows assimilation of proteinaceous substrates. This is Extracellular metalloproteinase mep (mep) from Aspergillus terreus (strain NIH 2624 / FGSC A1156).